We begin with the raw amino-acid sequence, 379 residues long: Cytochrome b (379 aa).

A run of 4 helical transmembrane segments spans residues 33 to 53 (FGSLLGLCLISQILTGLFLAM), 77 to 98 (WLIRNLHANGASFFFICLYLHI), 113 to 133 (WNIGVVLFLLVMMTAFVGYVL), and 178 to 198 (FFAFHFLFPFVVAGATMIHLL). 2 residues coordinate heme b: H83 and H97. 2 residues coordinate heme b: H182 and H196. H201 provides a ligand contact to a ubiquinone. 4 helical membrane-spanning segments follow: residues 226-246 (YKDLLGFIIMLTALTMLALFY), 288-308 (LGGVLALLSSILVLMVVPILH), 320-340 (ASQLLFWILVADMLVLTWIGG), and 347-367 (YIIIGQVASVLYFSLFLVLNP).

The protein belongs to the cytochrome b family. As to quaternary structure, the cytochrome bc1 complex contains 3 respiratory subunits (MT-CYB, CYC1 and UQCRFS1), 2 core proteins (UQCRC1 and UQCRC2) and probably 6 low-molecular weight proteins. Heme b is required as a cofactor.

Its subcellular location is the mitochondrion inner membrane. Its function is as follows. Component of the ubiquinol-cytochrome c reductase complex (complex III or cytochrome b-c1 complex) that is part of the mitochondrial respiratory chain. The b-c1 complex mediates electron transfer from ubiquinol to cytochrome c. Contributes to the generation of a proton gradient across the mitochondrial membrane that is then used for ATP synthesis. This Anguilla dieffenbachii (New Zealand longfin eel) protein is Cytochrome b (mt-cyb).